The chain runs to 924 residues: Periplasmic nitrate reductase (924 aa).

The segment at residues 1-30 (MNRRDFIKNTAIASAASVAGLSVPSSMLGA) is a signal peptide (tat-type signal). The 4Fe-4S Mo/W bis-MGD-type domain maps to 35–91 (WKWDKAVCRFCGTGCGIMIARKDGKIVATKGDPAAPVNRGLNCIKGYFNAKIMYGED). The [4Fe-4S] cluster site is built by C42, C45, C49, and C77. Residues K79, Q147, N172, C176, 209-216 (WGANMAEM), M417, Q421, N527, 552-553 (SD), K575, D602, and 814-823 (TGRVLEHWHS) contribute to the Mo-bis(molybdopterin guanine dinucleotide) site. Residue W890 coordinates substrate. N898 and K915 together coordinate Mo-bis(molybdopterin guanine dinucleotide).

It belongs to the prokaryotic molybdopterin-containing oxidoreductase family. NasA/NapA/NarB subfamily. Component of the periplasmic nitrate reductase NapAB complex composed of NapA and NapB. The cofactor is [4Fe-4S] cluster. Requires Mo-bis(molybdopterin guanine dinucleotide) as cofactor. Post-translationally, predicted to be exported by the Tat system. The position of the signal peptide cleavage has not been experimentally proven.

Its subcellular location is the periplasm. It carries out the reaction 2 Fe(II)-[cytochrome] + nitrate + 2 H(+) = 2 Fe(III)-[cytochrome] + nitrite + H2O. In terms of biological role, catalytic subunit of the periplasmic nitrate reductase complex NapAB. Receives electrons from NapB and catalyzes the reduction of nitrate to nitrite. The sequence is that of Periplasmic nitrate reductase from Campylobacter jejuni subsp. jejuni serotype O:2 (strain ATCC 700819 / NCTC 11168).